The following is a 352-amino-acid chain: CMP-sialic acid transporter 4 (352 aa).

Topologically, residues 1-51 (MEYRKIKDEDDHDVASDIESVKGKSHTVASSNIAMATLGVGSSERINWKRK) are cytoplasmic. The helical transmembrane segment at 52 to 72 (GVVTCALTILTSSQAILIVWS) threads the bilayer. Residues 73–81 (KRAGKYEYS) are Lumenal-facing. The helical transmembrane segment at 82-102 (VTTANFLVGTLKCALSLLALT) threads the bilayer. Topologically, residues 103–124 (RIWKNEGVTDDNRLSTTFDEVK) are cytoplasmic. The chain crosses the membrane as a helical span at residues 125–145 (VFPIPAALYLFKNLLQYYIFA). Topologically, residues 146-174 (YVDAPGYQILKNLNIISTGVLYRIILKRK) are lumenal. Residues 175–195 (LSEIQWAGFILLCCGCTTAQL) form a helical membrane-spanning segment. Residues 196–210 (NSNSDRVLQTSLPGW) lie on the Cytoplasmic side of the membrane. Residues 211–231 (TMAIVMALLSGFAGVYTEAII) form a helical membrane-spanning segment. Residues 232–238 (KKRPSRN) are Lumenal-facing. The chain crosses the membrane as a helical span at residues 239-259 (INVQNFWLYVFGMAFNAVAIV). Topologically, residues 260–276 (IQDFDAVANKGFFHGYS) are cytoplasmic. The helical transmembrane segment at 277-297 (FITLLMILNHALSGIAVSMVM) threads the bilayer. The Lumenal portion of the chain corresponds to 298–313 (KYADNIVKVYSTSVAM). The chain crosses the membrane as a helical span at residues 314 to 334 (LLTAVVSVFLFNFHLSLAFFL). Topologically, residues 335–352 (GSTVVSVSVYLHSAGKLR) are cytoplasmic.

This sequence belongs to the nucleotide-sugar transporter family. CMP-Sialate:CMP antiporter (TC 2.A.7.12) subfamily.

It is found in the golgi apparatus membrane. Functionally, sugar transporter involved in the transport of CMP-sialic acid from the cytoplasm into the Golgi. Essential protein. The sequence is that of CMP-sialic acid transporter 4 from Arabidopsis thaliana (Mouse-ear cress).